The chain runs to 115 residues: Aspartate 1-decarboxylase (115 aa).

The Schiff-base intermediate with substrate; via pyruvic acid role is filled by S25. S25 carries the pyruvic acid (Ser) modification. Residue T57 participates in substrate binding. Y58 functions as the Proton donor in the catalytic mechanism. Residue 71–73 (GAA) coordinates substrate.

It belongs to the PanD family. As to quaternary structure, heterooctamer of four alpha and four beta subunits. Pyruvate is required as a cofactor. Post-translationally, is synthesized initially as an inactive proenzyme, which is activated by self-cleavage at a specific serine bond to produce a beta-subunit with a hydroxyl group at its C-terminus and an alpha-subunit with a pyruvoyl group at its N-terminus.

The protein localises to the cytoplasm. It carries out the reaction L-aspartate + H(+) = beta-alanine + CO2. The protein operates within cofactor biosynthesis; (R)-pantothenate biosynthesis; beta-alanine from L-aspartate: step 1/1. In terms of biological role, catalyzes the pyruvoyl-dependent decarboxylation of aspartate to produce beta-alanine. In Campylobacter concisus (strain 13826), this protein is Aspartate 1-decarboxylase.